Here is a 546-residue protein sequence, read N- to C-terminus: Chaperonin GroEL (546 aa).

ATP contacts are provided by residues Thr30–Pro33, Lys51, Asp87–Thr91, Gly415, Asn479–Ala481, and Asp495.

It belongs to the chaperonin (HSP60) family. As to quaternary structure, forms a cylinder of 14 subunits composed of two heptameric rings stacked back-to-back. Interacts with the co-chaperonin GroES.

The protein resides in the cytoplasm. It catalyses the reaction ATP + H2O + a folded polypeptide = ADP + phosphate + an unfolded polypeptide.. Its function is as follows. Together with its co-chaperonin GroES, plays an essential role in assisting protein folding. The GroEL-GroES system forms a nano-cage that allows encapsulation of the non-native substrate proteins and provides a physical environment optimized to promote and accelerate protein folding. This Stutzerimonas stutzeri (strain A1501) (Pseudomonas stutzeri) protein is Chaperonin GroEL.